The primary structure comprises 211 residues: Cytochrome c biogenesis ATP-binding export protein CcmA (211 aa).

Residues 17–209 (LDVEDVTVFR…PSLAHVESFW (193 aa)) enclose the ABC transporter domain. 49–56 (GPNGAGKS) lines the ATP pocket.

It belongs to the ABC transporter superfamily. CcmA exporter (TC 3.A.1.107) family. As to quaternary structure, the complex is composed of two ATP-binding proteins (CcmA) and two transmembrane proteins (CcmB).

The protein localises to the cell inner membrane. It catalyses the reaction heme b(in) + ATP + H2O = heme b(out) + ADP + phosphate + H(+). Its function is as follows. Part of the ABC transporter complex CcmAB involved in the biogenesis of c-type cytochromes; once thought to export heme, this seems not to be the case, but its exact role is uncertain. Responsible for energy coupling to the transport system. The sequence is that of Cytochrome c biogenesis ATP-binding export protein CcmA from Gluconobacter oxydans (strain 621H) (Gluconobacter suboxydans).